The chain runs to 140 residues: RxLR effector protein CRE9 (140 aa).

The signal sequence occupies residues 1–24; the sequence is MRTSVFVALVVATFVATCISFTSA. The RxLR-dEER signature appears at 43-61; that stretch reads RTLAEADDWWLASTNTEER. A helical transmembrane segment spans residues 119-139; the sequence is LKILYGALLAGLIIVGVEAML.

The protein belongs to the RxLR effector family.

The protein resides in the secreted. Its subcellular location is the host cell. It localises to the membrane. Effector that is involved in host plant infection. Contributes to virulence during the early infection stage, by inhibiting plant defense responses induced by both PAMP-triggered immunity (PTI) and effector-triggered immunity (ETI). The sequence is that of RxLR effector protein CRE9 from Phytophthora infestans (strain T30-4) (Potato late blight agent).